Consider the following 910-residue polypeptide: SWI/SNF-related matrix-associated actin-dependent regulator of chromatin subfamily A-like protein 1 (910 aa).

Residues M1–I170 form a disordered region. An N-acetylserine modification is found at S2. Mediates interaction with RPA2 regions lie at residues S2–A30 and L5–A30. A coiled-coil region spans residues L3–L28. Basic and acidic residues predominate over residues E7–W29. Polar residues-rich tracts occupy residues Q32–L54 and S70–T95. A compositionally biased stretch (basic and acidic residues) spans E97–G107. The residue at position 117 (S117) is a Phosphoserine. Positions E120–S131 are enriched in polar residues. The segment covering F150–A160 has biased composition (basic and acidic residues). S164 carries the phosphoserine modification. HARP domains are found at residues K198 to E268 and S284 to P355. The 156-residue stretch at S402 to T557 folds into the Helicase ATP-binding domain. D415 to T422 contributes to the ATP binding site. Residues D506–H509 carry the DESH box motif. A Nuclear localization signal motif is present at residues R601–M618. The Helicase C-terminal domain maps to Y672–A825. Low complexity predominate over residues G865–S875. The interval G865–S890 is disordered.

The protein belongs to the SNF2/RAD54 helicase family. SMARCAL1 subfamily. In terms of assembly, interacts with RPA2; the interaction is direct and mediates the recruitment by the RPA complex of SMARCAL1 to sites of DNA damage. In terms of processing, DNA damage-regulated phosphorylation by kinases that may include ATM, ATR and PRKDC.

It localises to the nucleus. It carries out the reaction ATP + H2O = ADP + phosphate + H(+). In terms of biological role, ATP-dependent annealing helicase that binds selectively to fork DNA relative to ssDNA or dsDNA and catalyzes the rewinding of the stably unwound DNA. Rewinds single-stranded DNA bubbles that are stably bound by replication protein A (RPA). Acts throughout the genome to reanneal stably unwound DNA, performing the opposite reaction of many enzymes, such as helicases and polymerases, that unwind DNA. May play an important role in DNA damage response by acting at stalled replication forks. This Rattus norvegicus (Rat) protein is SWI/SNF-related matrix-associated actin-dependent regulator of chromatin subfamily A-like protein 1 (Smarcal1).